The chain runs to 740 residues: Death domain-associated protein 6 (740 aa).

The disordered stretch occupies residues 1–55 (MATANSIIVLDDDDEDEAAAQPGPSHPLPNAASPGAEAPSSSEPHGARGSSSSGG). The necessary for interaction with USP7 and ATRX stretch occupies residues 1 to 160 (MATANSIIVL…TSNEPSGNNP (160 aa)). S25 carries the post-translational modification Phosphoserine. Positions 29–55 (PNAASPGAEAPSSSEPHGARGSSSSGG) are enriched in low complexity. Residue K142 forms a Glycyl lysine isopeptide (Lys-Gly) (interchain with G-Cter in SUMO2) linkage. The tract at residues 147 to 185 (PAATTSNEPSGNNPPTHLSLDPTNAENTASQSPRTRGSR) is disordered. Residues 149–181 (ATTSNEPSGNNPPTHLSLDPTNAENTASQSPRT) show a composition bias toward polar residues. S178 and S213 each carry phosphoserine. Coiled-coil stretches lie at residues 180–217 (RTRG…ELDD) and 358–399 (ARRL…ARLQ). Residues 183–417 (GSRRQIQRLE…TPEASLDSGE (235 aa)) are interaction with histone H3.3. The necessary for interaction with USP7 stretch occupies residues 347 to 570 (GVDPALSDPV…SPVSQLFELE (224 aa)). The interval 384 to 724 (DKSEEGERKK…PRPGTCKTSV (341 aa)) is disordered. Positions 391–395 (RKKRR) match the Nuclear localization signal motif. Phosphoserine occurs at positions 412 and 424. Positions 430 to 489 (ASRAETDDEDDEESDEEEEEEEEEEEEEATDSEEEEDLEQMQEGQEDDEEEDEEEEAAAG) form a coiled coil. Residues 435–486 (TDDEDDEESDEEEEEEEEEEEEEATDSEEEEDLEQMQEGQEDDEEEDEEEEA) are compositionally biased toward acidic residues. Phosphothreonine is present on T459. A phosphoserine mark is found at S495 and S498. Over residues 496-505 (PMSSLQISNE) the composition is skewed to polar residues. Residues 501–625 (QISNEKNLEP…GVSPHNWGDS (125 aa)) are interaction with MAP3K5. K512 carries the post-translational modification N6-acetyllysine. A compositionally biased stretch (polar residues) spans 514–524 (ISRSSGEQQNK). The segment covering 529-542 (SPSLLSEEPLAPSS) has biased composition (low complexity). Residues 551–561 (QPEELTLEEES) are compositionally biased toward acidic residues. Residues S561 and S580 each carry the phosphoserine modification. Polar residues predominate over residues 578-590 (TPSSVETDISSSR). Residues 626 to 740 (GPPCKKSRKE…EEIIVLSDSD (115 aa)) are interaction with SPOP. 2 (Microbial infection) Interaction with Puumala hantavirus nucleoprotein regions span residues 627–634 (PPCKKSRK) and 658–663 (KNGKKI). A Nuclear localization signal motif is present at residues 628–634 (PCKKSRK). Glycyl lysine isopeptide (Lys-Gly) (interchain with G-Cter in SUMO1) cross-links involve residues K630 and K631. Residues 650–660 (ERQRSVHEKNG) are compositionally biased toward basic and acidic residues. S668 and S671 each carry phosphoserine. Over residues 673 to 683 (LASLAPVADSS) the composition is skewed to low complexity. A phosphoserine mark is found at S688, S702, S737, and S739. The segment covering 693–711 (LVTSSLCIPSPARLSQTPH) has biased composition (polar residues). The tract at residues 733-740 (IIVLSDSD) is sumo interaction motif (SIM).

It belongs to the DAXX family. Homomultimer. Interacts (via C-terminus) with TNFRSF6 (via death domain). Interacts with PAX5, SLC2A4/GLUT4, MAP3K5, TGFBR2, phosphorylated dimeric HSPB1/HSP27, CENPC, ETS1, sumoylated PML, UBE2I, MCRS1 and TP53. Interacts (via N-terminus) with HIPK2 and HIPK3. Interacts with HIPK1, which induces translocation from PML/POD/ND10 nuclear bodies to chromatin and enhances association with HDAC1. Interacts (non-phosphorylated) with PAX3, PAX7, DEK, HDAC1, HDAC2, HDAC3, acetylated histone H4 and histones H2A, H2B, H3, H3.3 and H4. Interacts with SPOP; mediating CUL3-dependent proteasomal degradation. Interacts with CBP; the interaction is dependent the sumoylation of CBP and suppresses CBP transcriptional activity via recruitment of HDAC2 directly in the complex with TP53 and HIPK2. Interacts with AXIN1; the interaction stimulates the interaction of DAXX with TP53, stimulates 'Ser-46' phosphorylation of TP53 on and induces cell death on UV irradiation. Interacts with MDM2; the interaction is direct. Interacts with USP7; the interaction is direct and independent of MDM2 and TP53. Part of a complex with DAXX, MDM2 and USP7 under non-stress conditions. Interacts (via N-terminus) with RASSF1 (via C-terminus); the interaction is independent of MDM2 and TP53; RASSF1 isoform A disrupts interactions among MDM2, DAXX and USP7, thus contributing to the efficient activation of TP53 by promoting MDM2 self-ubiquitination in cell-cycle checkpoint control in response to DNA damage. Interacts with ATRX to form the chromatin remodeling complex ATRX:DAXX. Interacts with HSF1 (via homotrimeric form preferentially); this interaction relieves homotrimeric HSF1 from repression of its transcriptional activity by HSP90-dependent multichaperone complex upon heat shock. Interacts with SUMO1P1/SUMO5. As to quaternary structure, (Microbial infection) Interacts with human cytomegalovirus/HHV-5 tegument phosphoprotein pp71 and protein UL123. In terms of assembly, (Microbial infection) Interacts with Epstein-Barr virus protein BNRF1. (Microbial infection) Interacts with human adenovirus 5 E1B-55K protein; this interaction might alterate the normal interactions of DAXX, PML, and TP53, which may contribute to cell transformation. As to quaternary structure, (Microbial infection) Interacts with Puumala hantavirus nucleoprotein. In terms of processing, sumoylated with SUMO1 on multiple lysine residues. Post-translationally, phosphorylated by HIPK1 upon glucose deprivation. Polyubiquitinated; which is promoted by CUL3 and SPOP and results in proteasomal degradation. Ubiquitinated by MDM2; inducing its degradation. Deubiquitinated by USP7; leading to stabilize it. Ubiquitous.

It localises to the cytoplasm. The protein localises to the nucleus. The protein resides in the nucleoplasm. Its subcellular location is the PML body. It is found in the nucleolus. It localises to the chromosome. The protein localises to the centromere. In terms of biological role, transcription corepressor known to repress transcriptional potential of several sumoylated transcription factors. Down-regulates basal and activated transcription. Its transcription repressor activity is modulated by recruiting it to subnuclear compartments like the nucleolus or PML/POD/ND10 nuclear bodies through interactions with MCSR1 and PML, respectively. Seems to regulate transcription in PML/POD/ND10 nuclear bodies together with PML and may influence TNFRSF6-dependent apoptosis thereby. Inhibits transcriptional activation of PAX3 and ETS1 through direct protein-protein interactions. Modulates PAX5 activity; the function seems to involve CREBBP. Acts as an adapter protein in a MDM2-DAXX-USP7 complex by regulating the RING-finger E3 ligase MDM2 ubiquitination activity. Under non-stress condition, in association with the deubiquitinating USP7, prevents MDM2 self-ubiquitination and enhances the intrinsic E3 ligase activity of MDM2 towards TP53, thereby promoting TP53 ubiquitination and subsequent proteasomal degradation. Upon DNA damage, its association with MDM2 and USP7 is disrupted, resulting in increased MDM2 autoubiquitination and consequently, MDM2 degradation, which leads to TP53 stabilization. Acts as a histone chaperone that facilitates deposition of histone H3.3. Acts as a targeting component of the chromatin remodeling complex ATRX:DAXX which has ATP-dependent DNA translocase activity and catalyzes the replication-independent deposition of histone H3.3 in pericentric DNA repeats outside S-phase and telomeres, and the in vitro remodeling of H3.3-containing nucleosomes. Does not affect the ATPase activity of ATRX but alleviates its transcription repression activity. Upon neuronal activation associates with regulatory elements of selected immediate early genes where it promotes deposition of histone H3.3 which may be linked to transcriptional induction of these genes. Required for the recruitment of histone H3.3:H4 dimers to PML-nuclear bodies (PML-NBs); the process is independent of ATRX and facilitated by ASF1A; PML-NBs are suggested to function as regulatory sites for the incorporation of newly synthesized histone H3.3 into chromatin. In case of overexpression of centromeric histone variant CENPA (as found in various tumors) is involved in its mislocalization to chromosomes; the ectopic localization involves a heterotypic tetramer containing CENPA, and histones H3.3 and H4 and decreases binding of CTCF to chromatin. Proposed to mediate activation of the JNK pathway and apoptosis via MAP3K5 in response to signaling from TNFRSF6 and TGFBR2. Interaction with HSPB1/HSP27 may prevent interaction with TNFRSF6 and MAP3K5 and block DAXX-mediated apoptosis. In contrast, in lymphoid cells JNC activation and TNFRSF6-mediated apoptosis may not involve DAXX. Shows restriction activity towards human cytomegalovirus (HCMV). Plays a role as a positive regulator of the heat shock transcription factor HSF1 activity during the stress protein response. In Homo sapiens (Human), this protein is Death domain-associated protein 6 (DAXX).